Here is a 1582-residue protein sequence, read N- to C-terminus: ATP-binding cassette sub-family C member 8 (1582 aa).

Residues 1-30 lie on the Extracellular side of the membrane; it reads MPLAFCGTENHSAAYRVDQGVLNNGCFVDA. Cys6 and Cys26 are disulfide-bonded. N-linked (GlcNAc...) asparagine glycosylation occurs at Asn10. A helical membrane pass occupies residues 31-47; it reads LNVVPHVFLLFITFPIL. Topologically, residues 48–72 are cytoplasmic; sequence FIGWGSQSSKVHIHHSTWLHFPGHN. Residues 73–89 form a helical membrane-spanning segment; sequence LRWILTFILLFVLVCEI. Residues 90 to 106 are Extracellular-facing; that stretch reads AEGILSDGVTESRHLHL. The helical transmembrane segment at 107–123 threads the bilayer; it reads YMPAGMAFMAAITSVVY. The Cytoplasmic portion of the chain corresponds to 124–136; it reads YHNIETSNFPKLL. Residues 137-153 form a helical membrane-spanning segment; sequence IALLIYWTLAFITKTIK. The Extracellular portion of the chain corresponds to 154 to 169; that stretch reads FVKFYDHAIGFSQLRF. The helical transmembrane segment at 170–186 threads the bilayer; the sequence is CLTGLLVILYGMLLLVE. Topologically, residues 187–303 are cytoplasmic; sequence VNVIRVRRYI…AFGRRLILSS (117 aa). Positions 299–602 constitute an ABC transmembrane type-1 1 domain; sequence LILSSTFRIL…LSSVVRSTVK (304 aa). Residues 304–319 traverse the membrane as a helical segment; the sequence is TFRILADLLGFAGPLC. Residues 320–356 lie on the Extracellular side of the membrane; that stretch reads IFGIVDHLGKENHVFQPKTQFLGVYFVSSQEFLGNAY. The chain crosses the membrane as a helical span at residues 357–372; that stretch reads VLAVLLFLALLLQRTF. The Cytoplasmic segment spans residues 373–438; sequence LQASYYVAIE…MWFFFLCPNL (66 aa). A helical transmembrane segment spans residues 439–454; that stretch reads WTMPVQIIVGVILLYY. Residues 455 to 460 lie on the Extracellular side of the membrane; it reads ILGVSA. Residues 461–473 form a helical membrane-spanning segment; it reads LIGAAVIILLAPV. Over 474 to 541 the chain is Cytoplasmic; the sequence is QYFVATKLSQ…SLRAFAVYTS (68 aa). The chain crosses the membrane as a helical span at residues 542-557; sequence ISIFMNTAIPIAAVLI. Over 558-576 the chain is Extracellular; it reads TFVGHVSFFKESDLSPSVA. A helical membrane pass occupies residues 577-592; that stretch reads FASLSLFHILVTPLFL. Over 593–1013 the chain is Cytoplasmic; it reads LSSVVRSTVK…YLSSAGILLL (421 aa). Residues 679–930 enclose the ABC transporter 1 domain; the sequence is VQIIGGFFTW…ECQLFEHWKT (252 aa). The ATP site is built by Trp688, Gly716, Ser720, and Ser721. Ser720 serves as a coordination point for Mg(2+). Positions 741-766 are disordered; that stretch reads SNLPDSEGEDPSSPERETAAGSDIRS. Gln775 is a binding site for Mg(2+). Residues 939–950 show a composition bias toward basic and acidic residues; that stretch reads LEKETVMERKAS. The tract at residues 939–962 is disordered; that stretch reads LEKETVMERKASEPSQGLPRAMSS. The ABC transmembrane type-1 2 domain occupies 1013–1307; the sequence is LSLLVFSQLL…MVRNLADMEI (295 aa). A helical transmembrane segment spans residues 1014–1031; that stretch reads SLLVFSQLLKHMVLVAID. Over 1032-1067 the chain is Extracellular; it reads YWLAKWTDSALVLSPAARNCSLSQECDLDQSVYAMV. N-linked (GlcNAc...) asparagine glycosylation occurs at Asn1050. The helical transmembrane segment at 1068–1084 threads the bilayer; the sequence is FTLLCSLGIVLCLVTSV. Residues 1085–1143 lie on the Cytoplasmic side of the membrane; that stretch reads TVEWTGLKVAKRLHRSLLNRIILAPMRFFETTPLGSILNRFSSDCNTIDQHIPSTLECL. Residues 1144–1161 traverse the membrane as a helical segment; it reads SRSTLLCVSALTVISYVT. Position 1162 (Pro1162) is a topological domain, extracellular. The helical transmembrane segment at 1163-1175 threads the bilayer; the sequence is VFLVALLPLAVVC. Residues 1176-1249 lie on the Cytoplasmic side of the membrane; it reads YFIQKYFRVA…FLTAANRWLE (74 aa). Residues 1250 to 1265 traverse the membrane as a helical segment; that stretch reads VCMEYIGACVVLIAAA. The Extracellular portion of the chain corresponds to 1266–1281; sequence TSISNSLHRELSAGLV. Residues 1282 to 1297 traverse the membrane as a helical segment; that stretch reads GLGLTYALMVSNYLNW. Residues 1298–1582 lie on the Cytoplasmic side of the membrane; it reads MVRNLADMEI…VFASFVRADK (285 aa). The ABC transporter 2 domain maps to 1345–1579; the sequence is IQIQNLSVRY…KDSVFASFVR (235 aa). Residues Thr1381, Gly1382, Gly1384, Lys1385, Ser1386, and Ser1387 each contribute to the ADP site. Ser1483 contributes to the ATP binding site.

It belongs to the ABC transporter superfamily. ABCC family. Conjugate transporter (TC 3.A.1.208) subfamily. Forms an heterooctamer with KCNJ11; four ABCC8/SUR1 molecules interact with one KCNJ11 homotetramer.

Its subcellular location is the cell membrane. With respect to regulation, KATP channels are regulated by cytoplasmic ATP/ADP ratios; ATP inhibits the channel by closing the pore, while ADP activates the channel. Activated by phosphatidylinositol 4,5-biphosphate (PtdIns(4,5)P2). Its function is as follows. Regulator subunit of pancreatic ATP-sensitive potassium channel (KATP), playing a major role in the regulation of insulin release. In pancreatic cells, it forms KATP channels with KCNJ11; KCNJ11 forms the channel pore while ABCC8 is required for activation and regulation. The chain is ATP-binding cassette sub-family C member 8 (ABCC8) from Cricetus cricetus (Black-bellied hamster).